Consider the following 612-residue polypeptide: UvrABC system protein C (612 aa).

Residues 21–99 (KLPGVYQMYD…IKSQKPPFNI (79 aa)) form the GIY-YIG domain. The UVR domain occupies 209-244 (EVLQQELQVEMEQASQALDFERAVVVRDQITDLRQV).

Belongs to the UvrC family. In terms of assembly, interacts with UvrB in an incision complex.

The protein resides in the cytoplasm. Its function is as follows. The UvrABC repair system catalyzes the recognition and processing of DNA lesions. UvrC both incises the 5' and 3' sides of the lesion. The N-terminal half is responsible for the 3' incision and the C-terminal half is responsible for the 5' incision. The polypeptide is UvrABC system protein C (Saccharophagus degradans (strain 2-40 / ATCC 43961 / DSM 17024)).